A 523-amino-acid polypeptide reads, in one-letter code: Light-independent protochlorophyllide reductase subunit B (523 aa).

Asp36 is a [4Fe-4S] cluster binding site. The active-site Proton donor is Asp290. A substrate-binding site is contributed by 425 to 426 (GL).

This sequence belongs to the ChlB/BchB/BchZ family. In terms of assembly, protochlorophyllide reductase is composed of three subunits; ChlL, ChlN and ChlB. Forms a heterotetramer of two ChlB and two ChlN subunits. [4Fe-4S] cluster is required as a cofactor.

The catalysed reaction is chlorophyllide a + oxidized 2[4Fe-4S]-[ferredoxin] + 2 ADP + 2 phosphate = protochlorophyllide a + reduced 2[4Fe-4S]-[ferredoxin] + 2 ATP + 2 H2O. The protein operates within porphyrin-containing compound metabolism; chlorophyll biosynthesis (light-independent). Its function is as follows. Component of the dark-operative protochlorophyllide reductase (DPOR) that uses Mg-ATP and reduced ferredoxin to reduce ring D of protochlorophyllide (Pchlide) to form chlorophyllide a (Chlide). This reaction is light-independent. The NB-protein (ChlN-ChlB) is the catalytic component of the complex. The protein is Light-independent protochlorophyllide reductase subunit B of Prochlorococcus marinus (strain MIT 9215).